We begin with the raw amino-acid sequence, 455 residues long: Glutamyl-tRNA reductase (455 aa).

Substrate contacts are provided by residues 49–52 (TCNR), Ser-109, 114–116 (ETQ), and Gln-120. Cys-50 serves as the catalytic Nucleophile. Position 189 to 194 (189 to 194 (GAGKMG)) interacts with NADP(+).

Belongs to the glutamyl-tRNA reductase family. In terms of assembly, homodimer.

The enzyme catalyses (S)-4-amino-5-oxopentanoate + tRNA(Glu) + NADP(+) = L-glutamyl-tRNA(Glu) + NADPH + H(+). Its pathway is porphyrin-containing compound metabolism; protoporphyrin-IX biosynthesis; 5-aminolevulinate from L-glutamyl-tRNA(Glu): step 1/2. In terms of biological role, catalyzes the NADPH-dependent reduction of glutamyl-tRNA(Glu) to glutamate 1-semialdehyde (GSA). This is Glutamyl-tRNA reductase from Geobacillus thermodenitrificans (strain NG80-2).